The following is a 384-amino-acid chain: Spermatogenesis-associated protein 32 (384 aa).

Residues 23–60 (RDDLSQHQIQEEQELEADMLEQKPQLQVDLDLDPDPDP) form a disordered region. Phosphoserine occurs at positions 167 and 170. Disordered stretches follow at residues 211 to 232 (DAHS…SSDL), 284 to 310 (VEER…LKSW), and 340 to 366 (LLQP…EKEN). Residues 214 to 231 (SAPPTTSSQAPSPLLSSD) are compositionally biased toward low complexity. Residues 353 to 366 (SKEDSVPPGKEKEN) are compositionally biased toward basic and acidic residues.

In terms of assembly, interacts with syntaxin-1 and ACTB. In terms of tissue distribution, detected in testis, and on the acrosomal cap of spermatids.

This chain is Spermatogenesis-associated protein 32 (SPATA32), found in Homo sapiens (Human).